Consider the following 325-residue polypeptide: L-lactate dehydrogenase (325 aa).

NAD(+) contacts are provided by residues Val21, Asp42, Lys47, Tyr73, and Gly87–Ala88. Substrate is bound by residues Gln90, Arg96, and Asn128 to Asp131. NAD(+) contacts are provided by residues Ala126–Asn128 and Ser151. Asp156–Arg159 provides a ligand contact to substrate. Positions 161 and 176 each coordinate beta-D-fructose 1,6-bisphosphate. Catalysis depends on His183, which acts as the Proton acceptor. Phosphotyrosine is present on Tyr228. Thr237 provides a ligand contact to substrate.

Belongs to the LDH/MDH superfamily. LDH family. In terms of assembly, homotetramer.

It is found in the cytoplasm. It carries out the reaction (S)-lactate + NAD(+) = pyruvate + NADH + H(+). Its pathway is fermentation; pyruvate fermentation to lactate; (S)-lactate from pyruvate: step 1/1. Allosterically activated by fructose 1,6-bisphosphate (FBP). Its function is as follows. Catalyzes the conversion of lactate to pyruvate. This chain is L-lactate dehydrogenase, found in Shouchella clausii (strain KSM-K16) (Alkalihalobacillus clausii).